The primary structure comprises 852 residues: SPS-sensor component SSY1 (852 aa).

At 1-285 the chain is on the cytoplasmic side; it reads MSSVNQIYDL…HIQRKLKVRH (285 aa). The interval 21 to 41 is disordered; that stretch reads DSHSQEHDTSSSLAKNDTDGT. Residues 30–41 are compositionally biased toward polar residues; sequence SSSLAKNDTDGT. Residues 286–306 form a helical membrane-spanning segment; the sequence is IQMLSIGACFSVGLFLTSGKA. At 307 to 329 the chain is on the extracellular side; it reads FSIAGPFGTLLGFGLTGSIILAT. The helical transmembrane segment at 330-350 threads the bilayer; it reads MLSFTELSTLIPVSSGFSGLA. Over 351–357 the chain is Cytoplasmic; the sequence is SRFVEDA. A helical membrane pass occupies residues 358-378; sequence FGFALGWTYWISCMLALPAQV. Residues 379-400 are Extracellular-facing; it reads SSSTFYLSYYNNVNISKGVTAG. The chain crosses the membrane as a helical span at residues 401 to 421; the sequence is FITLFSAFSIVVNLLDVSIMG. Glu422 is a topological domain (cytoplasmic). The helical transmembrane segment at 423 to 443 threads the bilayer; sequence IVYVAGISKVIIAILMVFTMI. Over 444 to 500 the chain is Extracellular; that stretch reads ILNAGHGNDIHEGVGFRYWDSSKSVRNLTYGLYRPTFDLADAGEGSKKGISGPKGRF. Residues 501–521 form a helical membrane-spanning segment; that stretch reads LATASVMLISTFAFSGVEMTF. The Cytoplasmic portion of the chain corresponds to 522–540; that stretch reads LASGEAINPRKTIPSATKR. The helical transmembrane segment at 541–561 threads the bilayer; the sequence is TFSIVLISYVFLIFSVGINIY. Over 562-623 the chain is Extracellular; sequence SGDPRLLSYF…PWVVALQNFG (62 aa). Residues 624–644 traverse the membrane as a helical segment; the sequence is LCTFASAFNAILIFFTATAGI. The Cytoplasmic segment spans residues 645–673; it reads SSLFSCSRTLYAMSVQRKAPPVFEICSKR. A helical transmembrane segment spans residues 674–694; sequence GVPYVSVIFSSLFSVIAYIAV. The Extracellular segment spans residues 695–703; sequence DQTAIENFD. Residues 704 to 724 form a helical membrane-spanning segment; that stretch reads VLANVSSASTSIIWMGLNLSF. Residues 725 to 755 are Cytoplasmic-facing; it reads LRFYYALKQRKDIISRNDSSYPYKSPFQPYL. A helical transmembrane segment spans residues 756–776; it reads AIYGLVGCSLFVIFMGYPNFI. At 777 to 784 the chain is on the extracellular side; sequence HHFWSTKA. Residues 785 to 805 traverse the membrane as a helical segment; sequence FFSAYGGLMFFFISYTAYKVL. Topologically, residues 806–852 are cytoplasmic; sequence GTSKIQRLDQLDMDSGRREMDRTDWTEHSQYLGTYRERAKKLVTWLI.

The protein belongs to the amino acid-polyamine-organocation (APC) superfamily. Component of the plasma membrane SPS (SSY1-PTR3-SSY5) amino acid sensor complex. Interacts directly with PTR3 and SSY5. Interacts with YCK1.

The protein resides in the cell membrane. Amino acid sensor component of the SPS-sensor system, which regulates the expression of several amino acid-metabolizing enzymes and amino acid- and peptide-permeases in response to extracellular amino acid levels by controlling the activity of two transcription factors, STP1 and STP2. Amino-acid permease homolog that seems to interact directly with the extracellular signaling molecules, but has no amino acid transporter activity. May recruit casein kinases YCK1 and YCK2 to hyperphosphorylate and activate downstream component PTR3 in response to amino acid stimulus. The sequence is that of SPS-sensor component SSY1 (SSY1) from Saccharomyces cerevisiae (strain ATCC 204508 / S288c) (Baker's yeast).